We begin with the raw amino-acid sequence, 279 residues long: tRNA pseudouridine synthase A (279 aa).

The active-site Nucleophile is the Asp54. A substrate-binding site is contributed by Tyr112.

It belongs to the tRNA pseudouridine synthase TruA family. In terms of assembly, homodimer.

The enzyme catalyses uridine(38/39/40) in tRNA = pseudouridine(38/39/40) in tRNA. In terms of biological role, formation of pseudouridine at positions 38, 39 and 40 in the anticodon stem and loop of transfer RNAs. The chain is tRNA pseudouridine synthase A from Cutibacterium acnes (strain DSM 16379 / KPA171202) (Propionibacterium acnes).